The following is a 261-amino-acid chain: Carbonic anhydrase 1 (261 aa).

Residue Ala2 is modified to N-acetylalanine. The region spanning 4–261 is the Alpha-carbonic anhydrase domain; the sequence is PDWGYDDKNG…LKGRTVRASF (258 aa). His65 serves as the catalytic Proton donor/acceptor. Residues His95, His97, and His120 each contribute to the Zn(2+) site. Substrate-binding positions include Thr200 and 200–201; that span reads TH. Positions 235-261 are disordered; the sequence is EGDNPVPSQRNNRPTQPLKGRTVRASF. Positions 240–249 are enriched in polar residues; sequence VPSQRNNRPT.

This sequence belongs to the alpha-carbonic anhydrase family. It depends on Zn(2+) as a cofactor.

It is found in the cytoplasm. It carries out the reaction hydrogencarbonate + H(+) = CO2 + H2O. It catalyses the reaction urea = cyanamide + H2O. With respect to regulation, inhibited by acetazolamide. Its function is as follows. Catalyzes the reversible hydration of carbon dioxide. Can hydrate cyanamide to urea. The polypeptide is Carbonic anhydrase 1 (CA1) (Macaca nemestrina (Pig-tailed macaque)).